Reading from the N-terminus, the 95-residue chain is Transcription and mRNA export factor ENY2-1 (95 aa).

Belongs to the ENY2 family. Component of the nuclear pore complex (NPC)-associated TREX-2 complex (transcription and export complex 2). Component of the SAGA transcription coactivator-HAT complex. Within the SAGA complex, participates in a subcomplex of SAGA called the DUB module (deubiquitination module).

The protein localises to the nucleus. Its subcellular location is the nucleoplasm. In terms of biological role, involved in mRNA export coupled transcription activation by association with both the TREX-2 and the SAGA complexes. The transcription regulatory histone acetylation (HAT) complex SAGA is a multiprotein complex that activates transcription by remodeling chromatin and mediating histone acetylation and deubiquitination. Within the SAGA complex, participates in a subcomplex that specifically deubiquitinates histones. The SAGA complex is recruited to specific gene promoters by activators, where it is required for transcription. The TREX-2 complex functions in docking export-competent ribonucleoprotein particles (mRNPs) to the nuclear entrance of the nuclear pore complex (nuclear basket). TREX-2 participates in mRNA export and accurate chromatin positioning in the nucleus by tethering genes to the nuclear periphery. The polypeptide is Transcription and mRNA export factor ENY2-1 (eny2-1) (Salmo salar (Atlantic salmon)).